Here is a 356-residue protein sequence, read N- to C-terminus: MIETDKLAAERIIAATPASSHEEAFERALRPRQLDEYVGQEKVRDQLEIFIEAAKRRSEALDHVLLFGPPGLGKTTLAHIIAREMGVNLRQTSGPVLERAGDLAALLTNLEANDVLFIDEIHRLSPVVEEILYPALEDYQIDIMIGEGPAARSVKLDLQPFTLVGATTRAGMLTNPLRDRFGIVARLEFYDAEQLSRIVRRSAALLNAQIDPAGALEIAKRSRGTPRIANRLLRRVRDYAEVKADGNITAAVADAALAMLDVDPVGFDLMDRKLLEAILHKFDGGPVGVDNLAAAIGEERDTIEDVLEPYLIQQGFLQRTPRGRVATLLTYRHFGLSAPDAANPVRNLWDTPDAEC.

Residues 4 to 190 form a large ATPase domain (RuvB-L) region; sequence TDKLAAERII…FGIVARLEFY (187 aa). Residues leucine 29, arginine 30, glycine 71, lysine 74, threonine 75, threonine 76, 137 to 139, arginine 180, tyrosine 190, and arginine 227 contribute to the ATP site; that span reads EDY. Threonine 75 lines the Mg(2+) pocket. The tract at residues 191 to 261 is small ATPAse domain (RuvB-S); the sequence is DAEQLSRIVR…VADAALAMLD (71 aa). Residues 264-356 form a head domain (RuvB-H) region; it reads PVGFDLMDRK…NLWDTPDAEC (93 aa). Residues arginine 300, arginine 319, and arginine 324 each coordinate DNA.

This sequence belongs to the RuvB family. In terms of assembly, homohexamer. Forms an RuvA(8)-RuvB(12)-Holliday junction (HJ) complex. HJ DNA is sandwiched between 2 RuvA tetramers; dsDNA enters through RuvA and exits via RuvB. An RuvB hexamer assembles on each DNA strand where it exits the tetramer. Each RuvB hexamer is contacted by two RuvA subunits (via domain III) on 2 adjacent RuvB subunits; this complex drives branch migration. In the full resolvosome a probable DNA-RuvA(4)-RuvB(12)-RuvC(2) complex forms which resolves the HJ.

It localises to the cytoplasm. The catalysed reaction is ATP + H2O = ADP + phosphate + H(+). Its function is as follows. The RuvA-RuvB-RuvC complex processes Holliday junction (HJ) DNA during genetic recombination and DNA repair, while the RuvA-RuvB complex plays an important role in the rescue of blocked DNA replication forks via replication fork reversal (RFR). RuvA specifically binds to HJ cruciform DNA, conferring on it an open structure. The RuvB hexamer acts as an ATP-dependent pump, pulling dsDNA into and through the RuvAB complex. RuvB forms 2 homohexamers on either side of HJ DNA bound by 1 or 2 RuvA tetramers; 4 subunits per hexamer contact DNA at a time. Coordinated motions by a converter formed by DNA-disengaged RuvB subunits stimulates ATP hydrolysis and nucleotide exchange. Immobilization of the converter enables RuvB to convert the ATP-contained energy into a lever motion, pulling 2 nucleotides of DNA out of the RuvA tetramer per ATP hydrolyzed, thus driving DNA branch migration. The RuvB motors rotate together with the DNA substrate, which together with the progressing nucleotide cycle form the mechanistic basis for DNA recombination by continuous HJ branch migration. Branch migration allows RuvC to scan DNA until it finds its consensus sequence, where it cleaves and resolves cruciform DNA. This chain is Holliday junction branch migration complex subunit RuvB, found in Burkholderia pseudomallei (strain 668).